Consider the following 474-residue polypeptide: MAGRQREHPTVTPYLQETSPERPPPLPPKKKLRKNLQVPEQVHAPALSPEVVPDSEEDEEVLYHGFSYPGVEVVQKGNGKRQIRRLEKTVIPRDLTPPEEEENNQSGSSKAVTMLITNPQVDPLVSAWEKGMELMNVLMEKYHVENDEKTAFKFLPEQNAVYRKICQTWLNEERRGLSLTFTTQKTFTELMGRFLAAYVETYAGVKHHNWDTTGCAVWAHGCTREEGVLRCFHGREMIQKEQVVEVDVGSENGQRALKEQPSKTKVVQNRWGRSVVQIKNDDARCCAEDVSCGNNMFSSKSCGLFFSEGLKAQIAFKQMQAFLQAEYPQMQRGQQRILVPLRCECLNKKDLVPQLGRQMCKVTPFALSGAEDLKTSEVTDKSALASILHPCVLVFQCANPVYRNSRGSAGPNCDFKISAPDVISALQLVRQFWKENVEDPLPKLIIPEFKWSTRLQYRNVALPTGHGDAEVEPF.

The tract at residues 1–34 (MAGRQREHPTVTPYLQETSPERPPPLPPKKKLRK) is disordered. Tyr142 is subject to Phosphotyrosine; by host. Residues Cys231 and His233 each coordinate Zn(2+). The interval 244-278 (VEVDVGSENGQRALKEQPSKTKVVQNRWGRSVVQI) is flexible loop. Zn(2+)-binding residues include Cys286, Cys302, Cys343, Cys345, Cys397, and Cys413. The interval 460–474 (VALPTGHGDAEVEPF) is C-terminal arm, DBP binding.

It belongs to the adenoviridae E2A DNA-binding protein family. Homomultimerizes on viral ssDNA bound to pTP. Forms a initiation complex with viral polymerase, pTP and hosts NFIA and POU2F1/OCT1. Interacts with host SRCAP.

The protein resides in the host nucleus. Plays a role in the elongation phase of viral strand displacement replication by unwinding the template in an ATP-independent fashion, employing its capacity to form multimers. Also enhances the rate of initiation. Released from template upon second strand synthesis. Assembles in complex with viral pTP, viral pol, host NFIA and host POU2F1/OCT1 on viral origin of replication. Covers the whole ssDNA genome during synthesis. The complementary strand synthesis induces its relese from DNA template. May inhibit cellular transcription mediated by the interaction between host SRCAP and CBP. This is DNA-binding protein from Homo sapiens (Human).